A 161-amino-acid chain; its full sequence is Nucleotide-binding protein BceJ2315_27070 (161 aa).

It belongs to the YajQ family.

Nucleotide-binding protein. This Burkholderia cenocepacia (strain ATCC BAA-245 / DSM 16553 / LMG 16656 / NCTC 13227 / J2315 / CF5610) (Burkholderia cepacia (strain J2315)) protein is Nucleotide-binding protein BceJ2315_27070.